The following is a 152-amino-acid chain: Nucleoside diphosphate kinase (152 aa).

The ATP site is built by Lys-11, Phe-59, Arg-87, Thr-93, Arg-104, and Asn-114. The active-site Pros-phosphohistidine intermediate is the His-117.

The protein belongs to the NDK family. In terms of assembly, homotetramer. The cofactor is Mg(2+).

The protein resides in the cytoplasm. It carries out the reaction a 2'-deoxyribonucleoside 5'-diphosphate + ATP = a 2'-deoxyribonucleoside 5'-triphosphate + ADP. The enzyme catalyses a ribonucleoside 5'-diphosphate + ATP = a ribonucleoside 5'-triphosphate + ADP. Its function is as follows. Major role in the synthesis of nucleoside triphosphates other than ATP. The ATP gamma phosphate is transferred to the NDP beta phosphate via a ping-pong mechanism, using a phosphorylated active-site intermediate. The protein is Nucleoside diphosphate kinase of Prochlorococcus marinus (strain MIT 9313).